The primary structure comprises 723 residues: Probable dipeptidyl-peptidase 5 (723 aa).

The first 19 residues, 1 to 19 (MAALRWLSAVVAVSTTVLA), serve as a signal peptide directing secretion. N-linked (GlcNAc...) asparagine glycosylation is found at Asn-79, Asn-97, Asn-154, Asn-255, Asn-381, and Asn-451. Ser-561 acts as the Charge relay system in catalysis. Residue Asn-608 is glycosylated (N-linked (GlcNAc...) asparagine). Residues Asp-644 and His-676 each act as charge relay system in the active site.

The protein belongs to the peptidase S9C family.

The protein localises to the secreted. Extracellular dipeptidyl-peptidase which removes N-terminal dipeptides sequentially from polypeptides having unsubstituted N-termini. This Aspergillus terreus (strain NIH 2624 / FGSC A1156) protein is Probable dipeptidyl-peptidase 5 (dpp5).